Consider the following 318-residue polypeptide: Retinol dehydrogenase 11 (318 aa).

Residues Met1–Ala21 form a helical; Signal-anchor for type II membrane protein membrane-spanning segment. Residues Pro22–Asp318 lie on the Cytoplasmic side of the membrane. Gly48–Gly54 lines the NADP(+) pocket. Lys112 carries the N6-acetyllysine modification. Ser177 contacts substrate. Tyr202 (proton acceptor) is an active-site residue.

This sequence belongs to the short-chain dehydrogenases/reductases (SDR) family. Interacts with SELENOF. In terms of processing, not glycosylated. Predominantly expressed in the epithelial cells of prostate, in both basal and luminal secretory cell populations. Expressed at low levels in spleen, thymus, testis, ovary, small intestine, colon, peripherical blood leukocytes, kidney, adrenal gland and fetal liver. Not detected in prostatic fibromuscular stromal cells, endothelial cells, or infiltrating lymphocytes.

The protein localises to the endoplasmic reticulum membrane. The enzyme catalyses all-trans-retinol + NADP(+) = all-trans-retinal + NADPH + H(+). It carries out the reaction 11-cis-retinol + NADP(+) = 11-cis-retinal + NADPH + H(+). The catalysed reaction is 9-cis-retinol + NADP(+) = 9-cis-retinal + NADPH + H(+). It catalyses the reaction 13-cis-retinol + NADP(+) = 13-cis-retinal + NADPH + H(+). The protein operates within cofactor metabolism; retinol metabolism. With respect to regulation, SELENOF decreases the retinol dehydrogenase activity. Retinol dehydrogenase with a clear preference for NADP. Displays high activity towards 9-cis, 11-cis and all-trans-retinol, and to a lesser extent on 13-cis-retinol. Exhibits a low reductive activity towards unsaturated medium-chain aldehydes such as cis -6-nonenal and no activity toward nonanal or 4-hydroxy-nonenal. Has no dehydrogenase activity towards steroid. The protein is Retinol dehydrogenase 11 (RDH11) of Homo sapiens (Human).